The following is a 306-amino-acid chain: Nuclear egress protein 1 (306 aa).

The disordered stretch occupies residues 1 to 49; sequence MYDTDPHRRGSRPGPYHGKERRRSRSSAAGGTLGVVRRASRKSLPPHAR. The CCCH-type zinc-finger motif lies at 106–225; sequence CLTLSGMGYY…YVIFPGTSAH (120 aa).

The protein belongs to the herpesviridae NEC1 protein family. As to quaternary structure, forms a heterohexameric complex with NEC2. Interacts with capsid vertex specific component 2/CVC2; this interaction directs the capsid to the host inner nuclear membrane to initiate budding. Post-translationally, phosphorylated at serine residues in the N-terminus. This phosphorylation regulates the localization within the inner nuclear membrane.

The protein resides in the host nucleus inner membrane. In terms of biological role, plays an essential role in virion nuclear egress, the first step of virion release from infected cell. Within the host nucleus, NEC1 interacts with the newly formed capsid through the vertexes and directs it to the inner nuclear membrane by associating with NEC2. Induces the budding of the capsid at the inner nuclear membrane as well as its envelopment into the perinuclear space. There, the NEC1/NEC2 complex promotes the fusion of the enveloped capsid with the outer nuclear membrane and the subsequent release of the viral capsid into the cytoplasm where it will reach the secondary budding sites in the host Golgi or trans-Golgi network. This is Nuclear egress protein 1 from Human herpesvirus 1 (strain 17) (HHV-1).